Consider the following 382-residue polypeptide: DnaJ homolog dnj-20 (382 aa).

The signal sequence occupies residues 1-21; that stretch reads MRILNVSLLVLTAFLVDFVEC. The J domain maps to 24–89; sequence DFYKILGVSK…EKRAMYDRHG (66 aa).

This Caenorhabditis briggsae protein is DnaJ homolog dnj-20.